We begin with the raw amino-acid sequence, 1013 residues long: Retinoblastoma-related protein 1 (1013 aa).

The tract at residues threonine 406–leucine 607 is domain A. The tract at residues threonine 406–proline 858 is pocket. A spacer region spans residues isoleucine 608 to glutamate 727. The tract at residues threonine 728–proline 858 is domain B. Phosphoserine occurs at positions 885 and 898. The interval valine 979–serine 1013 is disordered. Residues alanine 980 to alanine 1004 show a composition bias toward low complexity.

This sequence belongs to the retinoblastoma protein (RB) family. In terms of assembly, interacts with the begomovirus replication-associated protein (Rep), the nanovirus Clink protein, the mastrevirus RepA protein, E2FA, E2FB and E2FC. Interacts with MSI1 through its Domain A. Interacts with ATPK1/S6K1. Interacts with SCR. Interacts with HAT2. Interacts with FAMA. Interacts with MYB124 and MYB88. Component of a DREAM-like complex which modulates a variety of developmentally regulated genes and of the mitotic genes in proliferating and differentiated cells. Associates with MYB3R3 in both earlier and later stages of leaves development. Interacts with MYB3R4 only at early stages of leaves development. In terms of processing, highly phosphorylated by CDKA-1 during G1 to S phase transition. Once hyper-phosphorylated, becomes inactive and unable to interact with E2F. Ubiquitinated. Subject to proteasome-dependent degradation during sucrose starvation. In terms of tissue distribution, expressed in actively dividing cells. Detected in the shoot apical meristem, in young leaf primordia and in both sporophytic tissue and the megagametophyte.

Its subcellular location is the nucleus. In terms of biological role, key regulator of entry into cell division. Acts as a transcription repressor of E2F target genes, whose activity is required for progress from the G1 to the S phase of the cell cycle. Hyperphosphorylation by CDKA-1 prevents the binding to E2F transcription factors, allowing G1 to S phase transition to operate. Forms a stable complex with E2FA that functions in maintaining cell proliferation through repression of cell differentiation. Plays a central role in the mechanism controlling meristem cell differentiation, cell fate establishment and cell fate maintenance during organogenesis and gametogenesis. Required during lateral organ production. Also involved in controlling asymmetric divisions of stem cells in different stem cell niches. Acts as a negative regulator of cell proliferation during leaf and gametophytes development. At later stages of development, restricts the progression through additional endocycles. In the leaf, plays a role in the control of the mesophyll differentiation. Another role is its implication in the regulation of imprinted genes. Acts together with MSI1 to repress the expression of MET1 during gametogenesis. This in turn activates expression of the imprinted genes FIS2 and FWA. Regulates many genes of the polycomb repressive complex 2 (PRC2). Plays an important role in meiosis affecting different aspects of this complex process. Functions as a positive regulator of the developmental switch from embryonic heterotrophic growth to autotrophic growth. Interaction with mastrevirus RepA or nanovirus Clink protein disrupts the RBR/E2F interaction and releases the transcription of replicative enzymes needed by the virus by increasing the E2F DNA-binding activity. This is Retinoblastoma-related protein 1 (RBR1) from Arabidopsis thaliana (Mouse-ear cress).